Reading from the N-terminus, the 182-residue chain is Flavin prenyltransferase UbiX (182 aa).

Residues 9–11 (GAS), S35, 86–89 (SIKT), and R121 each bind FMN. Residues Y151 and R167 each contribute to the dimethylallyl phosphate site.

Belongs to the UbiX/PAD1 family.

The catalysed reaction is dimethylallyl phosphate + FMNH2 = prenylated FMNH2 + phosphate. Flavin prenyltransferase that catalyzes the synthesis of the prenylated FMN cofactor (prenyl-FMN) for 4-hydroxy-3-polyprenylbenzoic acid decarboxylase UbiD. The prenyltransferase is metal-independent and links a dimethylallyl moiety from dimethylallyl monophosphate (DMAP) to the flavin N5 and C6 atoms of FMN. This chain is Flavin prenyltransferase UbiX, found in Archaeoglobus fulgidus (strain ATCC 49558 / DSM 4304 / JCM 9628 / NBRC 100126 / VC-16).